Here is a 1024-residue protein sequence, read N- to C-terminus: Beta-galactosidase (1024 aa).

Asn-103 and Asp-202 together coordinate substrate. Asp-202 is a binding site for Na(+). Mg(2+)-binding residues include Glu-417, His-419, and Glu-462. Residues Glu-462 and 538-541 (EYAH) each bind substrate. The active-site Proton donor is the Glu-462. The Nucleophile role is filled by Glu-538. Residue Asn-598 coordinates Mg(2+). Na(+) is bound by residues Phe-602 and Asn-605. Positions 605 and 1000 each coordinate substrate.

Belongs to the glycosyl hydrolase 2 family. Homotetramer. Requires Mg(2+) as cofactor. It depends on Mn(2+) as a cofactor. Na(+) is required as a cofactor.

The catalysed reaction is Hydrolysis of terminal non-reducing beta-D-galactose residues in beta-D-galactosides.. Its activity is regulated as follows. Inhibited by phenylethyl thio-beta-D-galactoside (PETG), isopropyl thio-beta-D-galactoside (IPTG), L-ribose, D-galactonolactone, lactose and 2-amino-D-galactose. This is Beta-galactosidase (lacZ) from Escherichia coli (strain K12).